Reading from the N-terminus, the 230-residue chain is Cytidylate kinase (230 aa).

11–19 (GQSAAGKST) contacts ATP.

It belongs to the cytidylate kinase family. Type 1 subfamily.

Its subcellular location is the cytoplasm. It carries out the reaction CMP + ATP = CDP + ADP. It catalyses the reaction dCMP + ATP = dCDP + ADP. The protein is Cytidylate kinase of Chloroflexus aggregans (strain MD-66 / DSM 9485).